Consider the following 372-residue polypeptide: MPATCLLHTMLTLPSPSTRNLRSIQMPRARTFSSPSRYRNGFEHAGCRCQGSTLSQIYSSLGYSGLQASQVNEGYEHLIHMLGHSREAMQLEAGAGVAIREGFKVVDQFLKDVQHYYNSEAFSVDFSKPEIAAEEINQFIAKKTNDKITNMVKDLDSDTVMMLINYMYFRGKWDKPFDAQLTHKADFKVDEDTTVQVDMMKRTGRYDIYQDPVNQTTVMMVPYKGNTSMMIIFPDDGKMKELEESISRHHLKNWHDKLFRSSVDLFMPKFSITATSKLKGILEDMGVTDAFGDTADLSGLTEEVKVKVSQVVHKAVLSVDEKGTEAAAATTIEIMPMSLPDTVILNRPFLVLIVEDTTKSILFMGKITNPTE.

A signal peptide spans 1–19 (MPATCLLHTMLTLPSPSTR). N-linked (GlcNAc...) asparagine glycosylation is found at Asn-214 and Asn-226. Residues 328-347 (AATTIEIMPMSLPDTVILNR) are RCL.

Belongs to the serpin family.

The protein localises to the secreted. This is Alpha-1-antitrypsin homolog from Cyprinus carpio (Common carp).